Reading from the N-terminus, the 397-residue chain is Enoyl-[acyl-carrier-protein] reductase [NADH] (397 aa).

NAD(+) is bound by residues 48 to 53 (GASTGY), 74 to 75 (FE), 111 to 112 (DA), and 139 to 140 (VA). Tyr-225 contributes to the substrate binding site. Tyr-235 serves as the catalytic Proton donor. Residues Lys-244 and 273–275 (VVT) contribute to the NAD(+) site.

This sequence belongs to the TER reductase family. As to quaternary structure, monomer.

It catalyses the reaction a 2,3-saturated acyl-[ACP] + NAD(+) = a (2E)-enoyl-[ACP] + NADH + H(+). It participates in lipid metabolism; fatty acid biosynthesis. In terms of biological role, involved in the final reduction of the elongation cycle of fatty acid synthesis (FAS II). Catalyzes the reduction of a carbon-carbon double bond in an enoyl moiety that is covalently linked to an acyl carrier protein (ACP). In Burkholderia pseudomallei (strain 668), this protein is Enoyl-[acyl-carrier-protein] reductase [NADH].